Reading from the N-terminus, the 849-residue chain is MKGVDDAFLGVGDKPGLDIWCIMGSNLIAIEKSLHGKFYTGNTYIILSTVELKSGVRQHNVHYWVGEEAKEEDCLTASDKAIELDVALGSNTVQYRETQGEESDKFLSYFKPCIIPIQGSLSSHMRIYGDKSKDTTMFRCEGEHVARVTEVPFSRSSLDHKAVFVVDTESKIFLFSGCNSSMQTRAKALDVVKHLKENRHCGRCEIATIEDGKLVGDSDAGDFWNLFGGYAPIPRDVQDTVMTELMTTSSKKLFWINKRNLVPVETNLLEREMLNSDRNYILDCGTEVFLWMGMTTLVSERRTSVTALEDYVRCEGRQSNARSVILTEGHETVEFKMHFQHWPKNAVPKLYEAGREKVAAIFKHQGYDVTEIPEDKPRHFISCNGSLKVWLVDNGSVTLLCTEEQEQLYNGDCYIIRYSYIEDGKDYHLFFAWSGLNSINEDRVAAASLMSGMIDSVKGHAVVAQVFEGREPEMFFLVFKSLIIFKGGRSMAYKNFVSQRSDANGWYQKNGVALFRVQGLKHDCIRAIQVDLAASSLNSSHCYILQAGGSFFTWLGSLSSPSDHNLLDRMMDKLCPLKQSLLVREGSEPDRFWEALGGRSEYSKEKQVKDWPADPHLYTCHFEQGLFKAKEVFSFSQDDLVTEEILILDCVEELHIWVGHQSGVLSMEQALDIGKMFLQAGIHQDGRRPIDTTMYIVTEGDEPRFFTSFFNWDYSKQTMLGNSFERKLAILKGISQKLETPERSLRKSSSSSLPRRSPGTSSSEPTTPEQRAAARTFASASTGKLLRERSPAALSPSLSTPSPSPRSRSSASSSPASWNSTPSTVARRLFPPSLHASAEAVATGTPRRL.

Gelsolin-like repeat units follow at residues 30–107 (IEKS…DKFL), 147–213 (RVTE…EDGK), 262–335 (VPVE…TVEF), 405–475 (QEQL…PEMF), and 527–566 (AIQV…DHNL). A disordered region spans residues 739-849 (ETPERSLRKS…AVATGTPRRL (111 aa)). 2 stretches are compositionally biased toward low complexity: residues 747 to 782 (KSSS…SAST) and 791 to 823 (PAAL…STPS).

The protein belongs to the villin/gelsolin family.

The protein resides in the cytoplasm. Its subcellular location is the cytoskeleton. In terms of biological role, ca(2+)-independent actin-binding protein. Binds actin microfilaments (MFs). Involved in actin filament bundling, severing and capping. Caps the barbed end of actin filaments and protects them from disassembly. Promotes VLN3-mediated MF severing. The polypeptide is Villin-1 (Oryza sativa subsp. indica (Rice)).